The chain runs to 155 residues: Fibroblast growth factor 1 (155 aa).

An N-acetylalanine modification is found at Ala-2. A propeptide spanning residues Ala-2–Lys-15 is cleaved from the precursor. Positions Lys-24–Lys-27 match the Nuclear localization signal motif. Residue Asn-33 coordinates heparin. Positions Lys-127–Lys-143 are heparin-binding.

It belongs to the heparin-binding growth factors family. As to quaternary structure, monomer. Homodimer. Interacts with FGFR1, FGFR2, FGFR3 and FGFR4. Affinity between fibroblast growth factors (FGFs) and their receptors is increased by heparan sulfate glycosaminoglycans that function as coreceptors. Found in a complex with FGFBP1, FGF1 and FGF2. Interacts with FGFBP1. Part of a Cu(2+)-dependent multiprotein aggregate containing FGF1, S100A13 and SYT1. Interacts with SYT1. Interacts with S100A13. Interacts with LRRC59. Interacts with CSNKA, CSNKB and FIBP. While binding with LRRC59, CSNKA and FIBP seem mutually exclusive, CSNKB and FIBP may cooperatively interact with FGF1. Forms a ternary complex with FGFR1 and ITGAV:ITGB3 and induces the recruitment of PTPN11 to the complex. In terms of processing, in the nucleus, phosphorylated by PKC/PRKCD. Predominantly expressed in kidney and brain. Detected at much lower levels in heart and skeletal muscle.

The protein localises to the secreted. Its subcellular location is the cytoplasm. The protein resides in the cell cortex. It is found in the cytosol. It localises to the nucleus. Plays an important role in the regulation of cell survival, cell division, angiogenesis, cell differentiation and cell migration. Functions as a potent mitogen in vitro. Acts as a ligand for FGFR1 and integrins. Binds to FGFR1 in the presence of heparin leading to FGFR1 dimerization and activation via sequential autophosphorylation on tyrosine residues which act as docking sites for interacting proteins, leading to the activation of several signaling cascades. Binds to integrin ITGAV:ITGB3. Its binding to integrin, subsequent ternary complex formation with integrin and FGFR1, and the recruitment of PTPN11 to the complex are essential for FGF1 signaling. Induces the phosphorylation and activation of FGFR1, FRS2, MAPK3/ERK1, MAPK1/ERK2 and AKT1. Can induce angiogenesis. The chain is Fibroblast growth factor 1 (FGF1) from Homo sapiens (Human).